A 257-amino-acid chain; its full sequence is Hydroxyacylglutathione hydrolase (257 aa).

H54, H56, D58, H59, H109, D129, and H167 together coordinate Zn(2+).

The protein belongs to the metallo-beta-lactamase superfamily. Glyoxalase II family. In terms of assembly, monomer. It depends on Zn(2+) as a cofactor.

It carries out the reaction an S-(2-hydroxyacyl)glutathione + H2O = a 2-hydroxy carboxylate + glutathione + H(+). The protein operates within secondary metabolite metabolism; methylglyoxal degradation; (R)-lactate from methylglyoxal: step 2/2. Its function is as follows. Thiolesterase that catalyzes the hydrolysis of S-D-lactoyl-glutathione to form glutathione and D-lactic acid. The protein is Hydroxyacylglutathione hydrolase of Marinomonas sp. (strain MWYL1).